Reading from the N-terminus, the 235-residue chain is Eukaryotic translation initiation factor 4E-1 (235 aa).

Residues 1 to 52 (MVVEDSMKATSAEDLSNSIANQNPRGRGGDEDEELEEGEIVGDDDLDSSNLS) form a disordered region. Over residues 13–24 (EDLSNSIANQNP) the composition is skewed to polar residues. A compositionally biased stretch (acidic residues) spans 30-47 (DEDEELEEGEIVGDDDLD). EIF4G-binding stretches follow at residues 60 to 63 (HPLE) and 70 to 106 (FDNPSAKSKQATWGASIRPIYTFSTVEEFWSVYNNIH). Residues 78–83 (KQATWG), lysine 110, and 128–129 (WE) each bind mRNA. Cysteine 133 and cysteine 171 are oxidised to a cystine. Positions 154–163 (YTLLAMIGEQ) are EIF4G-binding. MRNA contacts are provided by residues 178-183 (RSGQDK) and 223-227 (KKFDR).

The protein belongs to the eukaryotic initiation factor 4E family. As to quaternary structure, EIF4F is a multi-subunit complex, the composition of which varies with external and internal environmental conditions. It is composed of at least EIF4A, EIF4E and EIF4G. EIF4E is also known to interact with other partners. Interacts directly with eIF4G. In higher plants two isoforms of EIF4F have been identified, named isoform EIF4F and isoform EIF(iso)4F. Isoform EIF4F has subunits p220 and p26, whereas isoform EIF(iso)4F has subunits p82 and p28. (Microbial infection) Interacts with potyvirus viral genome-linked protein (VPg); this interaction is possible in susceptible hosts but impaired in resistant plants. Post-translationally, according to the redox status, the Cys-133-Cys-171 disulfide bridge may have a role in regulating protein function by affecting its ability to bind capped mRNA.

It localises to the nucleus. Its subcellular location is the cytoplasm. In terms of biological role, component of the protein complex eIF4F, which is involved in the recognition of the mRNA cap, ATP-dependent unwinding of 5'-terminal secondary structure and recruitment of mRNA to the ribosome. Recognizes and binds the 7-methylguanosine-containing mRNA cap during an early step in the initiation of protein synthesis and facilitates ribosome binding by inducing the unwinding of the mRNAs secondary structures. Key component of recessive resistance to potyviruses and Tombusviridae genus Carmovirus such as melon necrotic spot virus (MNSV). (Microbial infection) Susceptibility host factor required for viral infection by recruiting viral RNAs, including uncapped and non-polyadenylated RNA, to the host ribosomal complex via an interaction with viral genome-linked protein (VPg). The sequence is that of Eukaryotic translation initiation factor 4E-1 from Cucumis melo (Muskmelon).